The following is a 234-amino-acid chain: Phosphoribosylaminoimidazole-succinocarboxamide synthase (234 aa).

This sequence belongs to the SAICAR synthetase family.

The enzyme catalyses 5-amino-1-(5-phospho-D-ribosyl)imidazole-4-carboxylate + L-aspartate + ATP = (2S)-2-[5-amino-1-(5-phospho-beta-D-ribosyl)imidazole-4-carboxamido]succinate + ADP + phosphate + 2 H(+). It participates in purine metabolism; IMP biosynthesis via de novo pathway; 5-amino-1-(5-phospho-D-ribosyl)imidazole-4-carboxamide from 5-amino-1-(5-phospho-D-ribosyl)imidazole-4-carboxylate: step 1/2. This Staphylococcus carnosus (strain TM300) protein is Phosphoribosylaminoimidazole-succinocarboxamide synthase.